The primary structure comprises 135 residues: Universal stress protein Aq_178 (135 aa).

The protein belongs to the universal stress protein A family.

The protein is Universal stress protein Aq_178 of Aquifex aeolicus (strain VF5).